A 154-amino-acid chain; its full sequence is UPF0178 protein Glov_0658 (154 aa).

Belongs to the UPF0178 family.

In Trichlorobacter lovleyi (strain ATCC BAA-1151 / DSM 17278 / SZ) (Geobacter lovleyi), this protein is UPF0178 protein Glov_0658.